Reading from the N-terminus, the 687-residue chain is Polyphosphate kinase (687 aa).

Residue asparagine 45 participates in ATP binding. Mg(2+) contacts are provided by arginine 375 and arginine 405. Catalysis depends on histidine 435, which acts as the Phosphohistidine intermediate. ATP-binding residues include tyrosine 472, arginine 568, and histidine 596.

The protein belongs to the polyphosphate kinase 1 (PPK1) family. It depends on Mg(2+) as a cofactor. Post-translationally, an intermediate of this reaction is the autophosphorylated ppk in which a phosphate is covalently linked to a histidine residue through a N-P bond.

It catalyses the reaction [phosphate](n) + ATP = [phosphate](n+1) + ADP. Catalyzes the reversible transfer of the terminal phosphate of ATP to form a long-chain polyphosphate (polyP). The protein is Polyphosphate kinase of Burkholderia vietnamiensis (strain G4 / LMG 22486) (Burkholderia cepacia (strain R1808)).